We begin with the raw amino-acid sequence, 155 residues long: MPAPTIYVDADACPVKAEVEKVAERLGVVVTYVSNGGLRPSRDPMIRNVVVSKGADAADDWIVENAKSNDVVVTADIPLAARAVALGAHVLGPTGRPFTPETIGMAVAMRDLKQHLRETGESKGYNASFAPQDRSRFLGELDRILRRALKSATPG.

This sequence belongs to the UPF0178 family.

The polypeptide is UPF0178 protein mlr0875 (Mesorhizobium japonicum (strain LMG 29417 / CECT 9101 / MAFF 303099) (Mesorhizobium loti (strain MAFF 303099))).